Here is a 715-residue protein sequence, read N- to C-terminus: Ribosomal RNA large subunit methyltransferase K/L (715 aa).

The THUMP domain occupies 47-158; that stretch reads LGYKISLWTR…RDNVTIFLDF (112 aa).

It belongs to the methyltransferase superfamily. RlmKL family.

The protein resides in the cytoplasm. The catalysed reaction is guanosine(2445) in 23S rRNA + S-adenosyl-L-methionine = N(2)-methylguanosine(2445) in 23S rRNA + S-adenosyl-L-homocysteine + H(+). The enzyme catalyses guanosine(2069) in 23S rRNA + S-adenosyl-L-methionine = N(2)-methylguanosine(2069) in 23S rRNA + S-adenosyl-L-homocysteine + H(+). Specifically methylates the guanine in position 2445 (m2G2445) and the guanine in position 2069 (m7G2069) of 23S rRNA. The polypeptide is Ribosomal RNA large subunit methyltransferase K/L (Colwellia psychrerythraea (strain 34H / ATCC BAA-681) (Vibrio psychroerythus)).